Here is a 181-residue protein sequence, read N- to C-terminus: ATP synthase subunit delta (181 aa).

The protein belongs to the ATPase delta chain family. F-type ATPases have 2 components, F(1) - the catalytic core - and F(0) - the membrane proton channel. F(1) has five subunits: alpha(3), beta(3), gamma(1), delta(1), epsilon(1). F(0) has three main subunits: a(1), b(2) and c(10-14). The alpha and beta chains form an alternating ring which encloses part of the gamma chain. F(1) is attached to F(0) by a central stalk formed by the gamma and epsilon chains, while a peripheral stalk is formed by the delta and b chains.

The protein resides in the cell membrane. In terms of biological role, f(1)F(0) ATP synthase produces ATP from ADP in the presence of a proton or sodium gradient. F-type ATPases consist of two structural domains, F(1) containing the extramembraneous catalytic core and F(0) containing the membrane proton channel, linked together by a central stalk and a peripheral stalk. During catalysis, ATP synthesis in the catalytic domain of F(1) is coupled via a rotary mechanism of the central stalk subunits to proton translocation. This protein is part of the stalk that links CF(0) to CF(1). It either transmits conformational changes from CF(0) to CF(1) or is implicated in proton conduction. This Mycoplasma capricolum subsp. capricolum (strain California kid / ATCC 27343 / NCTC 10154) protein is ATP synthase subunit delta.